The primary structure comprises 288 residues: Energy-coupling factor transporter ATP-binding protein EcfA2 (288 aa).

Residues 3 to 246 form the ABC transporter domain; the sequence is IKLEQLGYCY…PDELVDLGLS (244 aa). Residue 40 to 47 participates in ATP binding; it reads GHTGSGKS.

It belongs to the ABC transporter superfamily. Energy-coupling factor EcfA family. In terms of assembly, forms a stable energy-coupling factor (ECF) transporter complex composed of 2 membrane-embedded substrate-binding proteins (S component), 2 ATP-binding proteins (A component) and 2 transmembrane proteins (T component).

The protein localises to the cell membrane. In terms of biological role, ATP-binding (A) component of a common energy-coupling factor (ECF) ABC-transporter complex. Unlike classic ABC transporters this ECF transporter provides the energy necessary to transport a number of different substrates. In Listeria monocytogenes serovar 1/2a (strain ATCC BAA-679 / EGD-e), this protein is Energy-coupling factor transporter ATP-binding protein EcfA2.